A 489-amino-acid chain; its full sequence is MSVYGLQRLYIAGAHADATSGKTFDTFDPATGELLARVQQASADDVDRAVASAREGQREWAAMTAMQRSRILRRAVELLRERNDALAELEMRDTGKPIAETRAVDIVTGADVIEYYAGLATAIEGLQVPLRPESFVYTRREPLGVCAGIGAWNYPIQIACWKSAPALAAGNAMIFKPSEVTPLSALKLAEIYTEAGVPAGVFNVVQGDGSVGALLSAHPGIAKVSFTGGVETGKKVMSLAGASSLKEVTMELGGKSPLIVFDDADLDRAADIAVTANFFSAGQVCTNGTRVFVQQAVKDAFVERVLARVARIRVGKPSDPDTNFGPLASAAQLDKVLGYIDSGKAEGAKLLAGGARLVNDHFASGQYVAPTVFGDCRDDMRIVREEIFGPVMSILPFETEDEAIARANATDYGLAAGVVTENLSRAHRAIHRLEAGICWINTWGESPAEMPVGGYKQSGVGRENGITTLEHYTRIKSVQVELGRYQPVF.

K(+) is bound by residues threonine 26 and aspartate 93. Residue 150–152 (GAW) coordinates NAD(+). Lysine 162 (charge relay system) is an active-site residue. 176–179 (KPSE) is an NAD(+) binding site. Valine 180 is a binding site for K(+). 229–232 (GVET) provides a ligand contact to NAD(+). K(+) is bound at residue leucine 245. Glutamate 251 functions as the Proton acceptor in the catalytic mechanism. NAD(+)-binding residues include glycine 253, cysteine 285, and glutamate 386. Catalysis depends on cysteine 285, which acts as the Nucleophile. Cysteine 285 bears the Cysteine sulfenic acid (-SOH) mark. Lysine 456 and glycine 459 together coordinate K(+). Glutamate 463 (charge relay system) is an active-site residue.

Belongs to the aldehyde dehydrogenase family. In terms of assembly, dimer of dimers. It depends on K(+) as a cofactor.

The enzyme catalyses betaine aldehyde + NAD(+) + H2O = glycine betaine + NADH + 2 H(+). It functions in the pathway amine and polyamine biosynthesis; betaine biosynthesis via choline pathway; betaine from betaine aldehyde: step 1/1. In terms of biological role, involved in the biosynthesis of the osmoprotectant glycine betaine. Catalyzes the irreversible oxidation of betaine aldehyde to the corresponding acid. This is Betaine aldehyde dehydrogenase from Burkholderia pseudomallei (strain K96243).